We begin with the raw amino-acid sequence, 269 residues long: Expansin-B1 (269 aa).

The N-terminal stretch at 1–24 is a signal peptide; that stretch reads MGSLANNIMVVGAVLAALVAGGSC. Asparagine 34 carries N-linked (GlcNAc...) asparagine glycosylation. Residues 63–169 form the Expansin-like EG45 domain; sequence GGACGIKNVN…RRVRCKYPAG (107 aa). Cystine bridges form between cysteine 66–cysteine 94, cysteine 97–cysteine 164, and cysteine 102–cysteine 108. The region spanning 183 to 264 is the Expansin-like CBD domain; it reads NYLAVLVKYV…NWRPDAVYTS (82 aa).

Belongs to the expansin family. Expansin B subfamily. Expressed in anthers and pollen.

It localises to the secreted. Its subcellular location is the cell wall. The protein resides in the membrane. May aid fertilization by loosening the cell wall of the stigma and style, thereby facilitating penetration of the pollen tube. Acts selectively on grass cell walls, which are relatively poor in pectins and xyloglucans and rich in glucuronoarabinoxylans and (1-3),(1-4)-beta-D-glucans, when compared with cell walls of other angiosperms, including other monocots. The protein is Expansin-B1 (EXPB1) of Zea mays (Maize).